The following is a 397-amino-acid chain: 8-amino-7-oxononanoate synthase (397 aa).

A substrate-binding site is contributed by Arg24. Position 110–111 (Gly110–Tyr111) interacts with pyridoxal 5'-phosphate. Residue His135 coordinates substrate. Ser183, His211, and Thr240 together coordinate pyridoxal 5'-phosphate. Lys243 bears the N6-(pyridoxal phosphate)lysine mark. Thr357 contacts substrate.

It belongs to the class-II pyridoxal-phosphate-dependent aminotransferase family. BioF subfamily. In terms of assembly, homodimer. Pyridoxal 5'-phosphate is required as a cofactor.

It carries out the reaction 6-carboxyhexanoyl-[ACP] + L-alanine + H(+) = (8S)-8-amino-7-oxononanoate + holo-[ACP] + CO2. It functions in the pathway cofactor biosynthesis; biotin biosynthesis. In terms of biological role, catalyzes the decarboxylative condensation of pimeloyl-[acyl-carrier protein] and L-alanine to produce 8-amino-7-oxononanoate (AON), [acyl-carrier protein], and carbon dioxide. The chain is 8-amino-7-oxononanoate synthase from Hydrogenovibrio crunogenus (strain DSM 25203 / XCL-2) (Thiomicrospira crunogena).